The sequence spans 147 residues: Transcriptional regulator MraZ (147 aa).

SpoVT-AbrB domains lie at 5–50 (AIAL…PLSA) and 79–122 (AQEE…SDAG).

This sequence belongs to the MraZ family. In terms of assembly, forms oligomers.

The protein resides in the cytoplasm. The protein localises to the nucleoid. The sequence is that of Transcriptional regulator MraZ from Aromatoleum aromaticum (strain DSM 19018 / LMG 30748 / EbN1) (Azoarcus sp. (strain EbN1)).